The primary structure comprises 1293 residues: Phosphoribosylformylglycinamidine synthase (1293 aa).

Residues 305-316 and Ala676 each bind ATP; that span reads GAATGSGGEIRD. The tract at residues 305-327 is disordered; sequence GAATGSGGEIRDEGATGRGSKPK. Mg(2+) is bound by residues Asp677, Glu716, Asn720, and Asp884. Ser886 serves as a coordination point for ATP. Positions 1040-1293 constitute a Glutamine amidotransferase type-1 domain; that stretch reads MAILREQGVN…MFRNARVNLG (254 aa). Cys1133 acts as the Nucleophile in catalysis. Active-site residues include His1258 and Glu1260.

The protein in the N-terminal section; belongs to the FGAMS family. As to quaternary structure, monomer.

The protein localises to the cytoplasm. The enzyme catalyses N(2)-formyl-N(1)-(5-phospho-beta-D-ribosyl)glycinamide + L-glutamine + ATP + H2O = 2-formamido-N(1)-(5-O-phospho-beta-D-ribosyl)acetamidine + L-glutamate + ADP + phosphate + H(+). Its pathway is purine metabolism; IMP biosynthesis via de novo pathway; 5-amino-1-(5-phospho-D-ribosyl)imidazole from N(2)-formyl-N(1)-(5-phospho-D-ribosyl)glycinamide: step 1/2. Its function is as follows. Phosphoribosylformylglycinamidine synthase involved in the purines biosynthetic pathway. Catalyzes the ATP-dependent conversion of formylglycinamide ribonucleotide (FGAR) and glutamine to yield formylglycinamidine ribonucleotide (FGAM) and glutamate. This chain is Phosphoribosylformylglycinamidine synthase, found in Shewanella sp. (strain MR-4).